The primary structure comprises 332 residues: Cysteine and histidine-rich domain-containing protein 1 (332 aa).

Residue Ala2 is modified to N-acetylalanine. Residues 2-77 (ALLCYNRGCG…KPPEPVKPEV (76 aa)) form an interaction with PPP5C region. Residues Cys5, Cys10, Cys24, His27, Cys42, and Cys43 each contribute to the Zn(2+) site. CHORD domains lie at 5-64 (CYNR…KGRH) and 157-216 (CKNG…KGKH). At Thr47 the chain carries Phosphothreonine. Ser51 is subject to Phosphoserine. The Zn(2+) site is built by Cys59, His64, Cys157, Cys162, Cys176, His179, Cys194, Cys195, Cys211, and His216. Positions 65-316 (NSEKPPEPVK…AEPMQWASLE (252 aa)) are interaction with HSP90AA1 and HSP90AB1. The CS domain occupies 227–316 (VVPCRHDWHQ…AEPMQWASLE (90 aa)).

As to quaternary structure, interacts with HSP90AA1, ROCK1 and ROCK2. Interacts with HSP90AB1 and PPP5C. Underexpressed in many breast and lung cancers.

Functionally, regulates centrosome duplication, probably by inhibiting the kinase activity of ROCK2. Proposed to act as co-chaperone for HSP90. May play a role in the regulation of NOD1 via a HSP90 chaperone complex. In vitro, has intrinsic chaperone activity. This function may be achieved by inhibiting association of ROCK2 with NPM1. Plays a role in ensuring the localization of the tyrosine kinase receptor EGFR to the plasma membrane, and thus ensures the subsequent regulation of EGFR activity and EGF-induced actin cytoskeleton remodeling. Involved in stress response. Prevents tumorigenesis. The sequence is that of Cysteine and histidine-rich domain-containing protein 1 (CHORDC1) from Homo sapiens (Human).